A 539-amino-acid polypeptide reads, in one-letter code: Protein mushroom body miniature (539 aa).

Polar residues predominate over residues 1-11 (MHNSGGQSGWN). Residues 1–345 (MHNSGGQSGW…EDDKKARKQK (345 aa)) form a disordered region. A compositionally biased stretch (basic and acidic residues) spans 67 to 79 (KFRDPQQELDNHQ). A compositionally biased stretch (basic residues) spans 80–89 (PNKRGGRRNR). Over residues 90 to 101 (GGGGGGGGWGGR) the composition is skewed to gly residues. Over residues 199–208 (IKKEKEMEHK) the composition is skewed to basic and acidic residues. Positions 268–289 (VASTPKPKAVKPVSSSDSSTSD) are enriched in low complexity. 2 positions are modified to phosphoserine: Ser288 and Ser290. A phosphothreonine mark is found at Thr292 and Thr327. A compositionally biased stretch (acidic residues) spans 327-336 (TDEEESTEPE). A Phosphoserine modification is found at Ser332. At Thr333 the chain carries Phosphothreonine. 2 CCHC-type zinc fingers span residues 354-367 (CGIC…SFQC) and 371-386 (CRNC…NCPN). A disordered region spans residues 421–513 (VTAPVSAKPK…AASLPPQVFP (93 aa)). Positions 428–447 (KPKKDKKASIKKIKKSSQKR) are enriched in basic residues. Acidic residues predominate over residues 456-480 (DEEDDEEDDDEDEDDSSESDDSESS).

Post-translationally, may be phosphorylated in vivo by CkIIalpha. mbm and CkIIalpha colocalize to the nucleolus and mbm is phosphorylated in vitro by CkIIalpha. Shows widespread expression in third instar larval brain with no apparent difference between males and females (at protein level). Detected at low levels in the mushroom body neuropil and is also expressed in many cells of the brain outside the mushroom body (at protein level). Not detected in third instar larval brain cells in anaphase (at protein level).

It is found in the nucleus. The protein resides in the nucleolus. Its subcellular location is the cytoplasm. Its function is as follows. Required for small ribosomal subunit biogenesis in neuroblasts. Plays a role in mushroom body development. In Drosophila melanogaster (Fruit fly), this protein is Protein mushroom body miniature.